The sequence spans 229 residues: 3-dehydroquinate dehydratase (229 aa).

3-dehydroquinate is bound by residues 33 to 35 (EWR) and Arg65. Residue His121 is the Proton donor/acceptor of the active site. Catalysis depends on Lys146, which acts as the Schiff-base intermediate with substrate. Positions 188, 207, and 211 each coordinate 3-dehydroquinate.

This sequence belongs to the type-I 3-dehydroquinase family. As to quaternary structure, homodimer.

It catalyses the reaction 3-dehydroquinate = 3-dehydroshikimate + H2O. It participates in metabolic intermediate biosynthesis; chorismate biosynthesis; chorismate from D-erythrose 4-phosphate and phosphoenolpyruvate: step 3/7. In terms of biological role, involved in the third step of the chorismate pathway, which leads to the biosynthesis of aromatic amino acids. Catalyzes the cis-dehydration of 3-dehydroquinate (DHQ) and introduces the first double bond of the aromatic ring to yield 3-dehydroshikimate. This chain is 3-dehydroquinate dehydratase, found in Lactococcus lactis subsp. cremoris (strain MG1363).